A 206-amino-acid chain; its full sequence is Small ribosomal subunit protein uS4 (206 aa).

The S4 RNA-binding domain maps to cysteine 96 to alanine 156.

The protein belongs to the universal ribosomal protein uS4 family. Part of the 30S ribosomal subunit. Contacts protein S5. The interaction surface between S4 and S5 is involved in control of translational fidelity.

In terms of biological role, one of the primary rRNA binding proteins, it binds directly to 16S rRNA where it nucleates assembly of the body of the 30S subunit. With S5 and S12 plays an important role in translational accuracy. In Pseudomonas aeruginosa (strain LESB58), this protein is Small ribosomal subunit protein uS4.